Consider the following 378-residue polypeptide: Erythronate-4-phosphate dehydrogenase (378 aa).

Residues Ser45 and Thr66 each coordinate substrate. Asp146 contributes to the NAD(+) binding site. Arg207 is an active-site residue. Asp231 serves as a coordination point for NAD(+). Residue Glu236 is part of the active site. Residue His253 is the Proton donor of the active site. Residue Gly256 coordinates NAD(+).

Belongs to the D-isomer specific 2-hydroxyacid dehydrogenase family. PdxB subfamily. In terms of assembly, homodimer.

Its subcellular location is the cytoplasm. The catalysed reaction is 4-phospho-D-erythronate + NAD(+) = (R)-3-hydroxy-2-oxo-4-phosphooxybutanoate + NADH + H(+). It functions in the pathway cofactor biosynthesis; pyridoxine 5'-phosphate biosynthesis; pyridoxine 5'-phosphate from D-erythrose 4-phosphate: step 2/5. In terms of biological role, catalyzes the oxidation of erythronate-4-phosphate to 3-hydroxy-2-oxo-4-phosphonooxybutanoate. The protein is Erythronate-4-phosphate dehydrogenase of Wigglesworthia glossinidia brevipalpis.